The chain runs to 351 residues: tRNA uridine(34) hydroxylase (351 aa).

The Rhodanese domain occupies 146–240 (DDPQALFVDM…YARRAREQGL (95 aa)). Cys-200 functions as the Cysteine persulfide intermediate in the catalytic mechanism.

This sequence belongs to the TrhO family.

It carries out the reaction uridine(34) in tRNA + AH2 + O2 = 5-hydroxyuridine(34) in tRNA + A + H2O. Its function is as follows. Catalyzes oxygen-dependent 5-hydroxyuridine (ho5U) modification at position 34 in tRNAs. In Sodalis glossinidius (strain morsitans), this protein is tRNA uridine(34) hydroxylase.